Here is a 593-residue protein sequence, read N- to C-terminus: Vitamin H transporter (593 aa).

The Extracellular segment spans residues 1-121 (MTISNKSWRS…TTQTKAERRL (121 aa)). 3 positions are modified to phosphoserine: serine 32, serine 33, and serine 43. A helical transmembrane segment spans residues 122–142 (LYKLDIIIALYFFMLCWSKSV). Over 143 to 166 (DLNNYTNAYVSNMKEDLNMKGNDY) the chain is Cytoplasmic. The helical transmembrane segment at 167–187 (VYTSTIANVGAIVFQLPFMYL) threads the bilayer. The Extracellular portion of the chain corresponds to 188 to 190 (LPR). The helical transmembrane segment at 191–211 (FPSHIILPVMDLGWTWFTFAC) threads the bilayer. The Cytoplasmic segment spans residues 212 to 224 (YRANSLAELRAYR). Residues 225-245 (FILSAFGAAYYPVSQYILGCW) form a helical membrane-spanning segment. Residues 246 to 291 (YAPDEINSRVCLFFCGQQLGSVTSGLLQSRIFKSLNGVHGLAGWRW) are Extracellular-facing. Residues 292-312 (MFLIDAIAISLPTAIIGFFVI) form a helical membrane-spanning segment. Residues 313–361 (PGVPSKCYSLFLTDEEIRIARARNKRNQIKDGVDKSKLAPLWSRKLWKK) lie on the Cytoplasmic side of the membrane. A helical transmembrane segment spans residues 362-382 (VFCTPAFWVLVVFDTCSWNNM). Over 383 to 408 (TAYSGSYTLWLKSNTKYSIAQVNNLS) the chain is Extracellular. Residues 409-429 (VIPACLGFAYVIFCAFGADLF) traverse the membrane as a helical segment. Topologically, residues 430–432 (RCK) are cytoplasmic. A helical transmembrane segment spans residues 433–453 (WIFMVFAAIMNTVSCALLIKW). Residues 454-460 (DIPSKAK) lie on the Extracellular side of the membrane. Residues 461-481 (WYAFFTTYFSVAASPCLWSFI) form a helical membrane-spanning segment. Residues 482–492 (NDFLRFDPQVK) lie on the Cytoplasmic side of the membrane. A helical transmembrane segment spans residues 493-513 (AITWIAIYSFSQSTYAWIPTL). Residues 514-526 (AWPTVESPRFKTG) are Extracellular-facing. Residues 527–547 (YTVSLIFGAIYGLWTFVVLFF) form a helical membrane-spanning segment. Over 548–593 (YKRNEKKHALGNGIILYDSNKGEELPEFVKKNMEERDGYYYLKRSS) the chain is Cytoplasmic.

The protein belongs to the major facilitator superfamily. Allantoate permease family.

It localises to the cell membrane. Its function is as follows. Involved in uptake of biotin with the concomitant entry of protons. This Saccharomyces cerevisiae (strain ATCC 204508 / S288c) (Baker's yeast) protein is Vitamin H transporter (VHT1).